The chain runs to 215 residues: N-(5'-phosphoribosyl)anthranilate isomerase (215 aa).

It belongs to the TrpF family.

The enzyme catalyses N-(5-phospho-beta-D-ribosyl)anthranilate = 1-(2-carboxyphenylamino)-1-deoxy-D-ribulose 5-phosphate. It functions in the pathway amino-acid biosynthesis; L-tryptophan biosynthesis; L-tryptophan from chorismate: step 3/5. The protein is N-(5'-phosphoribosyl)anthranilate isomerase of Ruegeria sp. (strain TM1040) (Silicibacter sp.).